Consider the following 303-residue polypeptide: Methionyl-tRNA formyltransferase (303 aa).

108 to 111 (SDLP) is a binding site for (6S)-5,6,7,8-tetrahydrofolate.

This sequence belongs to the Fmt family.

It catalyses the reaction L-methionyl-tRNA(fMet) + (6R)-10-formyltetrahydrofolate = N-formyl-L-methionyl-tRNA(fMet) + (6S)-5,6,7,8-tetrahydrofolate + H(+). Attaches a formyl group to the free amino group of methionyl-tRNA(fMet). The formyl group appears to play a dual role in the initiator identity of N-formylmethionyl-tRNA by promoting its recognition by IF2 and preventing the misappropriation of this tRNA by the elongation apparatus. The sequence is that of Methionyl-tRNA formyltransferase from Rickettsia canadensis (strain McKiel).